Reading from the N-terminus, the 283-residue chain is Ribosomal RNA small subunit methyltransferase A (283 aa).

6 residues coordinate S-adenosyl-L-methionine: Asn13, Leu15, Gly39, Glu59, Asp87, and Asn108.

Belongs to the class I-like SAM-binding methyltransferase superfamily. rRNA adenine N(6)-methyltransferase family. RsmA subfamily.

Its subcellular location is the cytoplasm. It catalyses the reaction adenosine(1518)/adenosine(1519) in 16S rRNA + 4 S-adenosyl-L-methionine = N(6)-dimethyladenosine(1518)/N(6)-dimethyladenosine(1519) in 16S rRNA + 4 S-adenosyl-L-homocysteine + 4 H(+). Functionally, specifically dimethylates two adjacent adenosines (A1518 and A1519) in the loop of a conserved hairpin near the 3'-end of 16S rRNA in the 30S particle. May play a critical role in biogenesis of 30S subunits. The protein is Ribosomal RNA small subunit methyltransferase A of Helicobacter hepaticus (strain ATCC 51449 / 3B1).